Consider the following 89-residue polypeptide: Cell division topological specificity factor (89 aa).

The protein belongs to the MinE family.

Its function is as follows. Prevents the cell division inhibition by proteins MinC and MinD at internal division sites while permitting inhibition at polar sites. This ensures cell division at the proper site by restricting the formation of a division septum at the midpoint of the long axis of the cell. This chain is Cell division topological specificity factor, found in Clostridium beijerinckii (strain ATCC 51743 / NCIMB 8052) (Clostridium acetobutylicum).